We begin with the raw amino-acid sequence, 479 residues long: Poly(A) polymerase catalytic subunit (479 aa).

Catalysis depends on residues D202 and D204. D202, D204, and D253 together coordinate Ca(2+).

It belongs to the poxviridae poly(A) polymerase catalytic subunit family. Heterodimer of a large (catalytic) subunit and a small (regulatory) subunit.

It catalyses the reaction RNA(n) + ATP = RNA(n)-3'-adenine ribonucleotide + diphosphate. In terms of biological role, polymerase that creates the 3'-poly(A) tail of mRNA's. The polypeptide is Poly(A) polymerase catalytic subunit (OPG063) (Bos taurus (Bovine)).